A 55-amino-acid chain; its full sequence is Large ribosomal subunit protein bL33 (55 aa).

Belongs to the bacterial ribosomal protein bL33 family.

In Alcanivorax borkumensis (strain ATCC 700651 / DSM 11573 / NCIMB 13689 / SK2), this protein is Large ribosomal subunit protein bL33.